The primary structure comprises 380 residues: Heme A synthase (380 aa).

8 consecutive transmembrane segments (helical) span residues 36–56, 125–145, 151–171, 187–207, 227–247, 287–307, 320–340, and 344–364; these read IRAW…VGGL, VIGL…KIPA, LILP…MVAS, LATH…SILQ, FGLA…GALV, LVQF…VMVW, FAFN…IVTV, and APWQ…VLIL. His292 lines the heme pocket. His352 provides a ligand contact to heme.

The protein belongs to the COX15/CtaA family. Type 2 subfamily. As to quaternary structure, interacts with CtaB. It depends on heme b as a cofactor.

Its subcellular location is the cell membrane. It carries out the reaction Fe(II)-heme o + 2 A + H2O = Fe(II)-heme a + 2 AH2. It functions in the pathway porphyrin-containing compound metabolism; heme A biosynthesis; heme A from heme O: step 1/1. In terms of biological role, catalyzes the conversion of heme O to heme A by two successive hydroxylations of the methyl group at C8. The first hydroxylation forms heme I, the second hydroxylation results in an unstable dihydroxymethyl group, which spontaneously dehydrates, resulting in the formyl group of heme A. This is Heme A synthase from Ruegeria pomeroyi (strain ATCC 700808 / DSM 15171 / DSS-3) (Silicibacter pomeroyi).